We begin with the raw amino-acid sequence, 55 residues long: Large ribosomal subunit protein bL33 (55 aa).

Belongs to the bacterial ribosomal protein bL33 family.

The chain is Large ribosomal subunit protein bL33 from Methylorubrum extorquens (strain CM4 / NCIMB 13688) (Methylobacterium extorquens).